Reading from the N-terminus, the 537-residue chain is DNA-directed primase/polymerase protein (537 aa).

Positions methionine 1–lysine 22 form a coiled coil. Residues arginine 76, aspartate 114 to glutamate 116, lysine 165 to histidine 169, arginine 270 to arginine 273, and lysine 279 contribute to the substrate site. Positions 114 and 116 each coordinate Mn(2+). Positions 401, 408, 428, and 433 each coordinate Zn(2+). A Zinc knuckle motif motif is present at residues cysteine 401–lysine 434. The segment at serine 462 to serine 481 is disordered. Residues serine 462 to asparagine 536 are interaction with RPA1. The segment covering threonine 468 to threonine 478 has biased composition (low complexity). Short sequence motifs (RPA1-binding motif) lie at residues tryptophan 494–glutamate 507 and aspartate 524–glutamate 532.

Belongs to the eukaryotic-type primase small subunit family. As to quaternary structure, interacts with RPA1; leading to recruitment to chromatin and stimulate DNA primase activity. Interacts with SSBP1. Interacts with POLDIP2; leading to enhance DNA polymerase activity. The cofactor is Mn(2+).

Its subcellular location is the nucleus. It is found in the mitochondrion matrix. The protein resides in the chromosome. The catalysed reaction is ssDNA + n NTP = ssDNA/pppN(pN)n-1 hybrid + (n-1) diphosphate.. The enzyme catalyses DNA(n) + a 2'-deoxyribonucleoside 5'-triphosphate = DNA(n+1) + diphosphate. In terms of biological role, DNA primase and DNA polymerase required to tolerate replication-stalling lesions by bypassing them. Required to facilitate mitochondrial and nuclear replication fork progression by initiating de novo DNA synthesis using dNTPs and acting as an error-prone DNA polymerase able to bypass certain DNA lesions. Shows a high capacity to tolerate DNA damage lesions such as 8oxoG and abasic sites in DNA. Provides different translesion synthesis alternatives when DNA replication is stalled: able to synthesize DNA primers downstream of lesions, such as ultraviolet (UV) lesions, R-loops and G-quadruplexes, to allow DNA replication to continue. Can also realign primers ahead of 'unreadable lesions' such as abasic sites and 6-4 photoproduct (6-4 pyrimidine-pyrimidinone), thereby skipping the lesion. Repriming avoids fork degradation while leading to accumulation of internal ssDNA gaps behind the forks. Also able to incorporate nucleotides opposite DNA lesions such as 8oxoG, like a regular translesion synthesis DNA polymerase. Also required for reinitiating stalled forks after UV damage during nuclear DNA replication. Required for mitochondrial DNA (mtDNA) synthesis and replication, by reinitiating synthesis after UV damage or in the presence of chain-terminating nucleotides. Prevents APOBEC family-mediated DNA mutagenesis by repriming downstream of abasic site to prohibit error-prone translesion synthesis. Has non-overlapping function with POLH. In addition to its role in DNA damage response, also required to maintain efficient nuclear and mitochondrial DNA replication in unperturbed cells. In Mus musculus (Mouse), this protein is DNA-directed primase/polymerase protein.